The following is a 489-amino-acid chain: Glutamyl-tRNA(Gln) amidotransferase subunit A (489 aa).

Active-site charge relay system residues include K80 and S160. S184 acts as the Acyl-ester intermediate in catalysis.

It belongs to the amidase family. GatA subfamily. Heterotrimer of A, B and C subunits.

The catalysed reaction is L-glutamyl-tRNA(Gln) + L-glutamine + ATP + H2O = L-glutaminyl-tRNA(Gln) + L-glutamate + ADP + phosphate + H(+). Its function is as follows. Allows the formation of correctly charged Gln-tRNA(Gln) through the transamidation of misacylated Glu-tRNA(Gln) in organisms which lack glutaminyl-tRNA synthetase. The reaction takes place in the presence of glutamine and ATP through an activated gamma-phospho-Glu-tRNA(Gln). This is Glutamyl-tRNA(Gln) amidotransferase subunit A from Wolbachia pipientis wMel.